The primary structure comprises 525 residues: Probable protein kinase UbiB (525 aa).

The 383-residue stretch at 118-500 (DFERVPVASA…QKRTNRLLQG (383 aa)) folds into the Protein kinase domain. Residues 124–132 (VASASIAQV) and lysine 150 each bind ATP. Aspartate 285 serves as the catalytic Proton acceptor. A helical transmembrane segment spans residues 501–521 (LLLFGVAVGVGAVLARAFLAL).

The protein belongs to the ABC1 family. UbiB subfamily.

The protein localises to the cell inner membrane. It participates in cofactor biosynthesis; ubiquinone biosynthesis [regulation]. Functionally, is probably a protein kinase regulator of UbiI activity which is involved in aerobic coenzyme Q (ubiquinone) biosynthesis. The protein is Probable protein kinase UbiB of Paraburkholderia phytofirmans (strain DSM 17436 / LMG 22146 / PsJN) (Burkholderia phytofirmans).